The following is a 347-amino-acid chain: Anthranilate phosphoribosyltransferase (347 aa).

Residues Gly88, Gly91–Asp92, Thr96, Asn98–Thr101, Lys116–Ser124, and Ser128 each bind 5-phospho-alpha-D-ribose 1-diphosphate. Position 88 (Gly88) interacts with anthranilate. Ser100 is a binding site for Mg(2+). An anthranilate-binding site is contributed by Asn119. Arg174 contacts anthranilate. Positions 232 and 233 each coordinate Mg(2+).

Belongs to the anthranilate phosphoribosyltransferase family. Homodimer. It depends on Mg(2+) as a cofactor.

It catalyses the reaction N-(5-phospho-beta-D-ribosyl)anthranilate + diphosphate = 5-phospho-alpha-D-ribose 1-diphosphate + anthranilate. It functions in the pathway amino-acid biosynthesis; L-tryptophan biosynthesis; L-tryptophan from chorismate: step 2/5. Catalyzes the transfer of the phosphoribosyl group of 5-phosphorylribose-1-pyrophosphate (PRPP) to anthranilate to yield N-(5'-phosphoribosyl)-anthranilate (PRA). In Shewanella oneidensis (strain ATCC 700550 / JCM 31522 / CIP 106686 / LMG 19005 / NCIMB 14063 / MR-1), this protein is Anthranilate phosphoribosyltransferase.